Consider the following 94-residue polypeptide: Large ribosomal subunit protein eL37 (94 aa).

The Zn(2+) site is built by Cys-19, Cys-22, Cys-34, and Cys-37. Residues 19–37 (CRRCGKATYHKQKLRCAAC) form a C4-type zinc finger.

The protein belongs to the eukaryotic ribosomal protein eL37 family. Zn(2+) is required as a cofactor.

Its subcellular location is the cytoplasm. Binds to the 23S rRNA. This chain is Large ribosomal subunit protein eL37 (RPL37), found in Tetrahymena thermophila (strain SB210).